The chain runs to 311 residues: Methionyl-tRNA formyltransferase (311 aa).

A (6S)-5,6,7,8-tetrahydrofolate-binding site is contributed by 109–112; it reads SLLP.

This sequence belongs to the Fmt family.

The enzyme catalyses L-methionyl-tRNA(fMet) + (6R)-10-formyltetrahydrofolate = N-formyl-L-methionyl-tRNA(fMet) + (6S)-5,6,7,8-tetrahydrofolate + H(+). Its function is as follows. Attaches a formyl group to the free amino group of methionyl-tRNA(fMet). The formyl group appears to play a dual role in the initiator identity of N-formylmethionyl-tRNA by promoting its recognition by IF2 and preventing the misappropriation of this tRNA by the elongation apparatus. This Staphylococcus aureus (strain JH1) protein is Methionyl-tRNA formyltransferase.